Consider the following 40-residue polypeptide: Photosystem II reaction center protein J (40 aa).

Methionine 2 carries the post-translational modification N-acetylmethionine. The Cytoplasmic portion of the chain corresponds to 2–11 (MSEGGRIPLW). Residues 12 to 26 (IVATVAGMGVIVIVG) traverse the membrane as a helical segment. Topologically, residues 27–40 (LFFYGAYAGLGSSL) are lumenal.

The protein belongs to the PsbJ family. PSII is composed of 1 copy each of membrane proteins PsbA, PsbB, PsbC, PsbD, PsbE, PsbF, PsbH, PsbI, PsbJ, PsbK, PsbL, PsbM, PsbT, PsbX, PsbY, PsbZ, Psb30/Ycf12, peripheral proteins PsbO, CyanoQ (PsbQ), PsbU, PsbV and a large number of cofactors. It forms dimeric complexes. PSII binds multiple chlorophylls, carotenoids and specific lipids. serves as cofactor.

Its subcellular location is the cellular thylakoid membrane. Its function is as follows. One of the components of the core complex of photosystem II (PSII). PSII is a light-driven water:plastoquinone oxidoreductase that uses light energy to abstract electrons from H(2)O, generating O(2) and a proton gradient subsequently used for ATP formation. It consists of a core antenna complex that captures photons, and an electron transfer chain that converts photonic excitation into a charge separation. Functionally, may play a regulatory role in PSII biogenesis. The protein is Photosystem II reaction center protein J of Thermosynechococcus vestitus (strain NIES-2133 / IAM M-273 / BP-1).